Reading from the N-terminus, the 25-residue chain is Hypotensin-2 (25 aa).

The tract at residues 1–25 is disordered; that stretch reads AEIDFSGIPEDIIKEIKETNAKPPA. S6 carries the post-translational modification Phosphoserine. Over residues 11-25 the composition is skewed to basic and acidic residues; that stretch reads DIIKEIKETNAKPPA.

Belongs to the non-disulfide-bridged peptide (NDBP) superfamily. Expressed by the venom gland.

It localises to the secreted. Agonist of the B2 bradykinin receptor (BDKRB2). Potentiates the hypotensive effect of bradykinin (BK) and induces a direct vasorelaxing effect, independently of BK, by endothelium- and nitric oxide (NO)-dependent mechanisms in rat aortic ring preparations. Does not inhibit the angiotensin-converting enzyme (ACE). Also exerts proangiogenic, antiinflammatory, and antifibrogenic activities. Does not inhibit the angiotensin-converting enzyme (ACE) but weakly increases its activity, and weakly inhibits neprilysin (NEP) in a non-competitive manner. Exerts intermediate cytotoxicity and pro-inflammatory effects on mouse macrophages, and increases the phagocytic activity of these murine cells. Functionally, presents weak hemolytic activity at physiological concentrations (micromolar range), and weak lactate dehydrogenase (LDH) release from mast cells. Does not induce mast cell degranulation, and antimicrobial effects. In vivo, causes intense pain (but no edema formation), when injected in mice hind paws. Also induces discomfort and anxiety in mice, as it moderately diminishes locomotion and moderately increases rearing behavior. The chain is Hypotensin-2 from Tityus serrulatus (Brazilian scorpion).